A 376-amino-acid chain; its full sequence is Succinyl-diaminopimelate desuccinylase (376 aa).

Residue His-66 participates in Zn(2+) binding. The active site involves Asp-68. A Zn(2+)-binding site is contributed by Asp-99. Glu-133 functions as the Proton acceptor in the catalytic mechanism. Residues Glu-134, Glu-162, and His-349 each contribute to the Zn(2+) site.

It belongs to the peptidase M20A family. DapE subfamily. As to quaternary structure, homodimer. Zn(2+) serves as cofactor. Requires Co(2+) as cofactor.

The enzyme catalyses N-succinyl-(2S,6S)-2,6-diaminopimelate + H2O = (2S,6S)-2,6-diaminopimelate + succinate. It participates in amino-acid biosynthesis; L-lysine biosynthesis via DAP pathway; LL-2,6-diaminopimelate from (S)-tetrahydrodipicolinate (succinylase route): step 3/3. Its function is as follows. Catalyzes the hydrolysis of N-succinyl-L,L-diaminopimelic acid (SDAP), forming succinate and LL-2,6-diaminopimelate (DAP), an intermediate involved in the bacterial biosynthesis of lysine and meso-diaminopimelic acid, an essential component of bacterial cell walls. In Vesicomyosocius okutanii subsp. Calyptogena okutanii (strain HA), this protein is Succinyl-diaminopimelate desuccinylase.